A 118-amino-acid chain; its full sequence is Elongin-B (118 aa).

Residue Met-1 is modified to N-acetylmethionine. A Ubiquitin-like domain is found at 1 to 66; sequence MDVFLMIRRH…LGECGFTSQT (66 aa). Residue Thr-84 is modified to Phosphothreonine. Residues 92-118 form a disordered region; that stretch reads PFSSPPELPDVMKPQDSGSSANEQAVQ. The segment covering 107–118 has biased composition (polar residues); the sequence is DSGSSANEQAVQ. A phosphoserine mark is found at Ser-108 and Ser-111.

It belongs to the Elongin B family. In terms of assembly, heterotrimer of an A (ELOA, ELOA2 or ELOA3P), ELOB and ELOC subunit. The elongin BC complex interacts with EPOP; leading to recruit the elongin BC complex to Polycomb group (PcG) target genes, thereby restricting excessive activity of the PRC2/EED-EZH2 complex. Component of multiple cullin-RING E3 ubiquitin-protein ligase complexes composed of Elongin BC (ELOB and ELOC), a cullin (either CUL2 or CUL5), a catalytic subunit (either RBX1 or RNF7/RBX2), as well as a substrate adapter protein that can be either ASB2, ASB9, ASB11, KLHDC2, KLHDC3, KLHDC10, APPBP2, FEM1A, FEM1B, FEM1C, LRR1, PCMTD1, SOCS1, SOCS2, SOCS5, SPSB1, SPSB3, ELOA, VHL, WSB1 or RAB40C. As part of the Elongin BC E3 ubiquitin ligase complex; interacts with NRBP1. May also interact with DCUN1D1, DCUN1D2, DCUN1D3 and DCUN1D5. May form oligomers as a KLHDC2/KLHDC3-ELOB-ELOC complex; this interaction is autoinhibitory for the E3 ligase complex as the substrate-binding site of KLHDC2/KLHDC3 is blocked in the oligomer. As to quaternary structure, (Microbial infection) Following infection by HIV-1 virus, component of a cullin-5-RING E3 ubiquitin-protein ligase complex (ECS complex) hijacked by the HIV-1 Vif protein. (Microbial infection) Substrate adapter protein can be a viral protein such as HIV Vif. In terms of assembly, (Microbial infection) Interacts with molluscum contagiosum virus MC132. As to quaternary structure, (Microbial infection) Interacts with herpes virus 8 virus protein LANA1.

It is found in the nucleus. It functions in the pathway protein modification; protein ubiquitination. SIII, also known as elongin, is a general transcription elongation factor that increases the RNA polymerase II transcription elongation past template-encoded arresting sites. Subunit A is transcriptionally active and its transcription activity is strongly enhanced by binding to the dimeric complex of the SIII regulatory subunits B and C (elongin BC complex). In embryonic stem cells, the elongin BC complex is recruited by EPOP to Polycomb group (PcG) target genes in order generate genomic region that display both active and repressive chromatin properties, an important feature of pluripotent stem cells. Its function is as follows. Core component of multiple cullin-2 and cullin-5-RING E3 ubiquitin-protein ligase complexes (ECS complexes), which mediate the ubiquitination of target proteins. By binding to BC-box motifs it seems to link target recruitment subunits, like VHL and members of the SOCS box family, to Cullin/RBX1 modules that activate E2 ubiquitination enzymes. Component the von Hippel-Lindau ubiquitination complex CBC(VHL). A number of ECS complexes (containing either KLHDC2, KLHDC3, KLHDC10, APPBP2, FEM1A, FEM1B or FEM1C as substrate-recognition component) are part of the DesCEND (destruction via C-end degrons) pathway, which recognizes a C-degron located at the extreme C terminus of target proteins, leading to their ubiquitination and degradation. The ECS(ASB9) complex mediates ubiquitination and degradation of CKB. As part of a multisubunit ubiquitin ligase complex, polyubiquitinates monoubiquitinated POLR2A. ECS(LRR1) ubiquitinates MCM7 and promotes CMG replisome disassembly by VCP and chromatin extraction during S-phase. As part of the ECS(RAB40C) complex, mediates ANKRD28 ubiquitination and degradation, thereby inhibiting protein phosphatase 6 (PP6) complex activity and focal adhesion assembly during cell migration. In terms of biological role, (Microbial infection) Following infection by HIV-1 virus, component of a cullin-5-RING E3 ubiquitin-protein ligase complex (ECS complex) hijacked by the HIV-1 Vif protein, which catalyzes ubiquitination and degradation of APOBEC3F and APOBEC3G. The complex can also ubiquitinate APOBEC3H to some extent. This is Elongin-B from Homo sapiens (Human).